The primary structure comprises 127 residues: Calcitonin receptor-stimulating peptide 2 (127 aa).

The N-terminal stretch at 1-25 (MGFWKLSPFLAIGLLVMYQAGILQA) is a signal peptide. Positions 26–81 (APFRSALENPLESATLTEDEICVLLTAVVKDYVQMKARELQQEQETEGSSLTAQKS) are excised as a propeptide. A disordered region spans residues 65 to 85 (LQQEQETEGSSLTAQKSSCKD). Positions 72–81 (EGSSLTAQKS) are enriched in polar residues. The cysteines at positions 83 and 88 are disulfide-linked.

The protein belongs to the calcitonin family.

It is found in the secreted. The polypeptide is Calcitonin receptor-stimulating peptide 2 (CRSP2) (Canis lupus familiaris (Dog)).